A 311-amino-acid polypeptide reads, in one-letter code: Ornithine carbamoyltransferase (311 aa).

Residues 56–59 (STRT), Gln83, Arg107, and 134–137 (HPTQ) each bind carbamoyl phosphate. Residues Asn166, Asp230, and 234–235 (SM) each bind L-ornithine. Carbamoyl phosphate-binding positions include 270–271 (CL) and Lys298.

This sequence belongs to the aspartate/ornithine carbamoyltransferase superfamily. OTCase family.

It localises to the cytoplasm. It carries out the reaction carbamoyl phosphate + L-ornithine = L-citrulline + phosphate + H(+). Its pathway is amino-acid degradation; L-arginine degradation via ADI pathway; carbamoyl phosphate from L-arginine: step 2/2. Reversibly catalyzes the transfer of the carbamoyl group from carbamoyl phosphate (CP) to the N(epsilon) atom of ornithine (ORN) to produce L-citrulline. This Ignicoccus hospitalis (strain KIN4/I / DSM 18386 / JCM 14125) protein is Ornithine carbamoyltransferase.